The sequence spans 2894 residues: Bifunctional DNA-directed RNA polymerase subunit beta-beta' (2894 aa).

A DNA-directed RNA polymerase subunit beta region spans residues 1 to 1378; that stretch reads MANFTKLKNR…DVNIYGDEQD (1378 aa). The interval 1385–2894 is DNA-directed RNA polymerase subunit beta'; sequence PIAIKEDERP…QEEYEEDEEE (1510 aa). Residues C1450, C1452, C1465, and C1468 each contribute to the Zn(2+) site. The Mg(2+) site is built by D1849, D1851, and D1853. Zn(2+) is bound by residues C2179, C2253, C2260, and C2263.

This sequence in the N-terminal section; belongs to the RNA polymerase beta chain family. The protein in the C-terminal section; belongs to the RNA polymerase beta' chain family. As to quaternary structure, the RNAP catalytic core consists of 2 alpha, 1 beta/beta' and 1 omega subunit. When a sigma factor is associated with the core the holoenzyme is formed, which can initiate transcription. The cofactor is Mg(2+). Requires Zn(2+) as cofactor.

It carries out the reaction RNA(n) + a ribonucleoside 5'-triphosphate = RNA(n+1) + diphosphate. Its function is as follows. DNA-dependent RNA polymerase catalyzes the transcription of DNA into RNA using the four ribonucleoside triphosphates as substrates. This is Bifunctional DNA-directed RNA polymerase subunit beta-beta' (rpoBC) from Helicobacter hepaticus (strain ATCC 51449 / 3B1).